Consider the following 441-residue polypeptide: Probable magnesium transporter NIPA8 (441 aa).

Residues 1–4 (MGEW) are Extracellular-facing. Residues 5 to 25 (VIGAFINIFGSVAINFGTNLL) form a helical membrane-spanning segment. At 26–56 (KLGHNERERLALQDGGGKMPLKPIIHNQTWR) the chain is on the cytoplasmic side. The helical transmembrane segment at 57 to 77 (VGILVFLLGNCLNFISFGYAA) threads the bilayer. Residues 78–79 (QS) lie on the Extracellular side of the membrane. A helical transmembrane segment spans residues 80-100 (LLAALGSIQFVSNIAFAYVVL). Residues 101–105 (NKMVT) lie on the Cytoplasmic side of the membrane. A helical membrane pass occupies residues 106–126 (VKVLVATAFIVLGNVFLVAFG). Topologically, residues 127–144 (NHQSPVFTPEQLAEKYSN) are extracellular. The chain crosses the membrane as a helical span at residues 145–165 (VTFLVYCGILILIVAVHHFLY). Topologically, residues 166-184 (RKGEVLISTPGQEISSYWK) are cytoplasmic. The chain crosses the membrane as a helical span at residues 185 to 205 (MLLPFSYAVVSGAIGSCSVLF). The Extracellular portion of the chain corresponds to 206 to 222 (AKSLSNLLRLAMSSSYQ). Residues 223–243 (LHSWFTYSMLLLFLSTAGFWM) traverse the membrane as a helical segment. Residues 244-255 (TRLNEGLSLYDA) are Cytoplasmic-facing. The chain crosses the membrane as a helical span at residues 256–276 (ILIVPMFQIAWTFFSICTGCI). Residues 277–288 (YFQEFQVFDALR) lie on the Extracellular side of the membrane. The helical transmembrane segment at 289–309 (TTMFILGMMCVFIGISLLAPD) threads the bilayer. Residues 310 to 441 (DTRGNETKDN…MLEKTISSKA (132 aa)) lie on the Cytoplasmic side of the membrane. The disordered stretch occupies residues 313–347 (GNETKDNSSSLDSIVSSSVPTEEDRLIPQSSEDGH). The segment covering 320–330 (SSSLDSIVSSS) has biased composition (low complexity). Positions 334-347 (EEDRLIPQSSEDGH) are enriched in basic and acidic residues.

Belongs to the NIPA (TC 2.A.7) family. In terms of assembly, homodimer.

The protein resides in the cell membrane. The protein localises to the early endosome. Acts as a Mg(2+) transporter. Can also transport other divalent cations such as Fe(2+), Sr(2+), Ba(2+), Mn(2+) and Co(2+) but to a much less extent than Mg(2+). This chain is Probable magnesium transporter NIPA8, found in Arabidopsis thaliana (Mouse-ear cress).